A 273-amino-acid chain; its full sequence is Putative pyruvate, phosphate dikinase regulatory protein (273 aa).

153–160 contacts ADP; it reads GVSRTSKT.

Belongs to the pyruvate, phosphate/water dikinase regulatory protein family. PDRP subfamily.

The enzyme catalyses N(tele)-phospho-L-histidyl/L-threonyl-[pyruvate, phosphate dikinase] + ADP = N(tele)-phospho-L-histidyl/O-phospho-L-threonyl-[pyruvate, phosphate dikinase] + AMP + H(+). It carries out the reaction N(tele)-phospho-L-histidyl/O-phospho-L-threonyl-[pyruvate, phosphate dikinase] + phosphate + H(+) = N(tele)-phospho-L-histidyl/L-threonyl-[pyruvate, phosphate dikinase] + diphosphate. Bifunctional serine/threonine kinase and phosphorylase involved in the regulation of the pyruvate, phosphate dikinase (PPDK) by catalyzing its phosphorylation/dephosphorylation. This Rhizobium meliloti (strain 1021) (Ensifer meliloti) protein is Putative pyruvate, phosphate dikinase regulatory protein.